A 402-amino-acid chain; its full sequence is Type II NADH:quinone oxidoreductase (402 aa).

FAD-binding positions include 12–16 (GAGYA), 39–40 (NK), and Val83. Residue Glu172 is part of the active site. Residues Asp302, 319 to 320 (AQ), and Lys379 contribute to the FAD site.

The protein belongs to the NADH dehydrogenase family. FAD serves as cofactor.

Its subcellular location is the cell membrane. The catalysed reaction is a quinone + NADH + H(+) = a quinol + NAD(+). In terms of biological role, alternative, nonproton pumping NADH:quinone oxidoreductase that delivers electrons to the respiratory chain by oxidation of NADH and reduction of quinones, and contributes to the regeneration of NAD(+). This chain is Type II NADH:quinone oxidoreductase, found in Staphylococcus saprophyticus subsp. saprophyticus (strain ATCC 15305 / DSM 20229 / NCIMB 8711 / NCTC 7292 / S-41).